A 413-amino-acid polypeptide reads, in one-letter code: 1-deoxy-D-xylulose 5-phosphate reductoisomerase (413 aa).

Threonine 13, glycine 14, serine 15, isoleucine 16, arginine 40, asparagine 41, and asparagine 127 together coordinate NADPH. Position 128 (lysine 128) interacts with 1-deoxy-D-xylulose 5-phosphate. Residue glutamate 129 participates in NADPH binding. Residue aspartate 153 participates in Mn(2+) binding. Residues serine 154, glutamate 155, serine 184, and histidine 207 each contribute to the 1-deoxy-D-xylulose 5-phosphate site. Residue glutamate 155 coordinates Mn(2+). Glycine 213 is a binding site for NADPH. Residues serine 220, asparagine 225, lysine 226, and glutamate 229 each coordinate 1-deoxy-D-xylulose 5-phosphate. Glutamate 229 contacts Mn(2+).

The protein belongs to the DXR family. Requires Mg(2+) as cofactor. Mn(2+) is required as a cofactor.

It catalyses the reaction 2-C-methyl-D-erythritol 4-phosphate + NADP(+) = 1-deoxy-D-xylulose 5-phosphate + NADPH + H(+). The protein operates within isoprenoid biosynthesis; isopentenyl diphosphate biosynthesis via DXP pathway; isopentenyl diphosphate from 1-deoxy-D-xylulose 5-phosphate: step 1/6. Functionally, catalyzes the NADPH-dependent rearrangement and reduction of 1-deoxy-D-xylulose-5-phosphate (DXP) to 2-C-methyl-D-erythritol 4-phosphate (MEP). This chain is 1-deoxy-D-xylulose 5-phosphate reductoisomerase, found in Nitrosomonas europaea (strain ATCC 19718 / CIP 103999 / KCTC 2705 / NBRC 14298).